A 98-amino-acid chain; its full sequence is Small ribosomal subunit protein uS17B (98 aa).

Belongs to the universal ribosomal protein uS17 family. Part of the 30S ribosomal subunit.

One of the primary rRNA binding proteins, it binds specifically to the 5'-end of 16S ribosomal RNA. This is Small ribosomal subunit protein uS17B from Bacteroides thetaiotaomicron (strain ATCC 29148 / DSM 2079 / JCM 5827 / CCUG 10774 / NCTC 10582 / VPI-5482 / E50).